We begin with the raw amino-acid sequence, 322 residues long: Putative integrase ORF3 (322 aa).

The Integrase catalytic domain maps to arginine 153–isoleucine 322.

It belongs to the plectrovirus integrase ORF3 family.

Its function is as follows. This protein may encode an integrase, which is necessary for integration of the viral DNA into host genome. The sequence is that of Putative integrase ORF3 from Spiroplasma virus SpV1-R8A2 B (SpV1).